Consider the following 433-residue polypeptide: ATP-dependent RNA helicase SUB2 (433 aa).

The short motif at 49 to 77 (TGFRDFLLKPELLRAIGDCGFEHPSEVQQ) is the Q motif element. Residues 80–255 (IPQSILGTDV…KKFMQNPLEI (176 aa)) form the Helicase ATP-binding domain. Position 93 to 100 (93 to 100 (AKSGLGKT)) interacts with ATP. A DEAD box motif is present at residues 202 to 205 (DECD). The Helicase C-terminal domain maps to 267-428 (GLQQYYIKLE…EFPEEGVDPS (162 aa)).

It belongs to the DEAD box helicase family. DECD subfamily.

Its subcellular location is the nucleus. The enzyme catalyses ATP + H2O = ADP + phosphate + H(+). In terms of biological role, ATP-binding RNA helicase involved in transcription elongation and required for the export of mRNA out of the nucleus. SUB2 also plays a role in pre-mRNA splicing and spliceosome assembly. May be involved in rDNA and telomeric silencing, and maintenance of genome integrity. The sequence is that of ATP-dependent RNA helicase SUB2 (SUB2) from Scheffersomyces stipitis (strain ATCC 58785 / CBS 6054 / NBRC 10063 / NRRL Y-11545) (Yeast).